We begin with the raw amino-acid sequence, 418 residues long: Alditol oxidase (418 aa).

Residues 13 to 179 form the FAD-binding PCMH-type domain; the sequence is ITYTAKELLR…TSLTLDLEPA (167 aa). Residues 41 to 47, Ser-106, Ser-111, Gly-114, 118 to 121, and Val-169 each bind FAD; these read VLGSGHS and TGTH. At His-46 the chain carries Pros-8alpha-FAD histidine. Residue Ser-106 coordinates D-sorbitol. Position 106 (Ser-106) interacts with xylitol. Glu-320, Arg-322, and Thr-345 together coordinate D-sorbitol. Xylitol-binding residues include Glu-320, Arg-322, and Thr-345. Arg-322 contributes to the FAD binding site. An FAD-binding site is contributed by His-372. Residue Lys-375 participates in D-sorbitol binding. Residue Lys-375 coordinates xylitol.

The protein belongs to the oxygen-dependent FAD-linked oxidoreductase family. As to quaternary structure, monomer. FAD is required as a cofactor.

It catalyses the reaction an alditol + O2 = an aldose + H2O2. The catalysed reaction is xylitol + O2 = D-xylose + H2O2. It carries out the reaction D-sorbitol + O2 = D-glucose + H2O2. Functionally, oxidase that performs selective oxidation of the terminal primary hydroxyl group of several alditols, with a reduction of O2 to H2O2. Shows highest activity on xylitol and D-sorbitol, and a poor efficiency with D-mannitol and L-threitol. The sequence is that of Alditol oxidase (xyoA) from Streptomyces coelicolor (strain ATCC BAA-471 / A3(2) / M145).